The following is a 378-amino-acid chain: O-glycoside alpha-1,2-mannosyltransferase homolog 3 (378 aa).

The Cytoplasmic portion of the chain corresponds to 1-6 (MGIPKS). A helical; Signal-anchor for type II membrane protein transmembrane segment spans residues 7 to 24 (SIYFCILLFCIISFYLQS). At 25–378 (SKDGPKELKV…AIKWLENINS (354 aa)) the chain is on the lumenal side. Catalysis depends on Glu-276, which acts as the Nucleophile.

Belongs to the glycosyltransferase 15 family.

The protein localises to the endoplasmic reticulum membrane. Its subcellular location is the golgi apparatus membrane. Probable mannosyltransferase involved in O-glycosylation of cell wall and secreted proteins. In Schizosaccharomyces pombe (strain 972 / ATCC 24843) (Fission yeast), this protein is O-glycoside alpha-1,2-mannosyltransferase homolog 3 (omh3).